The chain runs to 420 residues: Tyrosine--tRNA ligase 2 (420 aa).

An L-tyrosine-binding site is contributed by tyrosine 34. The 'HIGH' region motif lies at 39-48 (PTGDSMHIGH). The L-tyrosine site is built by tyrosine 168 and glutamine 172. Residues 230–234 (KFGKS) carry the 'KMSKS' region motif. An ATP-binding site is contributed by lysine 233. Residues 352 to 418 (KNIVEWLVDL…GKKNYSLVKL (67 aa)) form the S4 RNA-binding domain.

This sequence belongs to the class-I aminoacyl-tRNA synthetase family. TyrS type 1 subfamily. Homodimer.

It localises to the cytoplasm. It carries out the reaction tRNA(Tyr) + L-tyrosine + ATP = L-tyrosyl-tRNA(Tyr) + AMP + diphosphate + H(+). Catalyzes the attachment of tyrosine to tRNA(Tyr) in a two-step reaction: tyrosine is first activated by ATP to form Tyr-AMP and then transferred to the acceptor end of tRNA(Tyr). The polypeptide is Tyrosine--tRNA ligase 2 (Bacillus cereus (strain ATCC 14579 / DSM 31 / CCUG 7414 / JCM 2152 / NBRC 15305 / NCIMB 9373 / NCTC 2599 / NRRL B-3711)).